Consider the following 207-residue polypeptide: Putative 3-methyladenine DNA glycosylase (207 aa).

This sequence belongs to the DNA glycosylase MPG family.

The protein is Putative 3-methyladenine DNA glycosylase of Listeria monocytogenes serotype 4a (strain HCC23).